The chain runs to 339 residues: Nicotinate-nucleotide--dimethylbenzimidazole phosphoribosyltransferase (339 aa).

The active-site Proton acceptor is Glu306.

This sequence belongs to the CobT family.

The enzyme catalyses 5,6-dimethylbenzimidazole + nicotinate beta-D-ribonucleotide = alpha-ribazole 5'-phosphate + nicotinate + H(+). The protein operates within nucleoside biosynthesis; alpha-ribazole biosynthesis; alpha-ribazole from 5,6-dimethylbenzimidazole: step 1/2. Its function is as follows. Catalyzes the synthesis of alpha-ribazole-5'-phosphate from nicotinate mononucleotide (NAMN) and 5,6-dimethylbenzimidazole (DMB). The chain is Nicotinate-nucleotide--dimethylbenzimidazole phosphoribosyltransferase from Brucella melitensis biotype 2 (strain ATCC 23457).